A 398-amino-acid chain; its full sequence is Bifunctional enzyme IspD/IspF (398 aa).

The tract at residues 1-234 (MPNPPRTAAI…SRLTALLGDI (234 aa)) is 2-C-methyl-D-erythritol 4-phosphate cytidylyltransferase. The interval 235 to 398 (RTGTGYDVHA…LPWGAEGLAG (164 aa)) is 2-C-methyl-D-erythritol 2,4-cyclodiphosphate synthase. A divalent metal cation-binding residues include Asp-241 and His-243. 4-CDP-2-C-methyl-D-erythritol 2-phosphate-binding positions include 241–243 (DVH) and 267–268 (HS). His-275 is an a divalent metal cation binding site. 4-CDP-2-C-methyl-D-erythritol 2-phosphate-binding positions include 289–291 (DIG), 365–368 (TTSE), Phe-372, and Arg-375.

In the N-terminal section; belongs to the IspD/TarI cytidylyltransferase family. IspD subfamily. It in the C-terminal section; belongs to the IspF family. A divalent metal cation serves as cofactor.

It carries out the reaction 2-C-methyl-D-erythritol 4-phosphate + CTP + H(+) = 4-CDP-2-C-methyl-D-erythritol + diphosphate. It catalyses the reaction 4-CDP-2-C-methyl-D-erythritol 2-phosphate = 2-C-methyl-D-erythritol 2,4-cyclic diphosphate + CMP. Its pathway is isoprenoid biosynthesis; isopentenyl diphosphate biosynthesis via DXP pathway; isopentenyl diphosphate from 1-deoxy-D-xylulose 5-phosphate: step 2/6. It participates in isoprenoid biosynthesis; isopentenyl diphosphate biosynthesis via DXP pathway; isopentenyl diphosphate from 1-deoxy-D-xylulose 5-phosphate: step 4/6. Bifunctional enzyme that catalyzes the formation of 4-diphosphocytidyl-2-C-methyl-D-erythritol from CTP and 2-C-methyl-D-erythritol 4-phosphate (MEP) (IspD), and catalyzes the conversion of 4-diphosphocytidyl-2-C-methyl-D-erythritol 2-phosphate (CDP-ME2P) to 2-C-methyl-D-erythritol 2,4-cyclodiphosphate (ME-CPP) with a corresponding release of cytidine 5-monophosphate (CMP) (IspF). This is Bifunctional enzyme IspD/IspF from Rhodopseudomonas palustris (strain BisB5).